Reading from the N-terminus, the 912-residue chain is WD repeat-containing protein 44 (912 aa).

Positions 1–14 are enriched in acidic residues; the sequence is MASESDTEEFFDAP. The tract at residues 1 to 25 is disordered; sequence MASESDTEEFFDAPEDVHLEGGDPI. An N-acetylalanine modification is found at A2. The tract at residues 2–170 is binding activity; sequence ASESDTEEFF…SSTAQLNVPE (169 aa). Position 3 is a phosphoserine (S3). The FFAT-like motif signature appears at 9–15; it reads EFFDAPE. Residues S50, S66, S71, S81, S96, and S126 each carry the phosphoserine modification. Disordered regions lie at residues 79 to 104 and 118 to 152; these read DDSL…GTEL and QEDS…KPVD. The span at 89–104 shows a compositional bias: polar residues; sequence QSDQATASPVTAGTEL. At T158 the chain carries Phosphothreonine. Disordered stretches follow at residues 183 to 202, 207 to 279, 318 to 349, 396 to 422, and 457 to 479; these read VKES…TKDF, EVAP…PKEN, QENG…ELTD, SNDA…RLKQ, and RDEV…MPYT. Positions 210–256 are important for interaction with ARHGAP26 AND ARHGAP10; that stretch reads PAKPPRQLTPEPDIVASTKKPVPARPPPPANFPPPRPPPPSRPAPPP. T218 is modified (phosphothreonine). Residues 232-255 show a composition bias toward pro residues; sequence PARPPPPANFPPPRPPPPSRPAPP. Phosphoserine is present on S261. Over residues 261–277 the composition is skewed to basic and acidic residues; the sequence is SELEFEALKTPDLDVPK. Residue T270 is modified to Phosphothreonine. Residues 333–346 form an important for interaction with RAB11A region; the sequence is VMGPQRPRSNSGRE. An interaction with RAB11 region spans residues 334 to 504; that stretch reads MGPQRPRSNS…DFDQIKVVQD (171 aa). S341 and S343 each carry phosphoserine. Position 348 is a phosphothreonine (T348). Residues S402, S469, S470, and S471 each carry the phosphoserine modification. Positions 466–475 are enriched in acidic residues; the sequence is DDPSSSDDEG. Y478 is modified (phosphotyrosine). The stretch at 508-547 is one WD 1 repeat; it reads EHMGAVWTMKFSHCGRLLASAGQDNVVRIWALKNAFDYFN. A disordered region spans residues 556-592; it reads EGRVSPSPSQESLNSSKSDTDTGVCSGTDEDPDDKNA. Phosphoserine occurs at positions 560 and 564. Residues 560–572 show a composition bias toward low complexity; that stretch reads SPSPSQESLNSSK. 6 WD repeats span residues 604-642, 644-684, 689-728, 739-778, 783-822, and 871-912; these read GHTA…CLCC, QHID…VALW, GQTK…YHTQ, KVGR…LSMK, VNSS…SKFT, and EDAE…KNLS.

In terms of assembly, interacts with the GTP-bound form of RAB11A when membrane-associated. Interacts with GRAF1/ARHGAP26 or GRAF2/ARHGAP10; the interaction connects the endoplasmic reticulum (ER) with the endosomal tubule. Interacts (via FFAT-like motif) with VAPA (via MSP domain) or VAPB (via MSP domain); the interaction connects the ER with the endosomal tubule. Does not bind to other Rab and Rho small G proteins. Post-translationally, phosphorylated by ATK1; the phosphorylation stabilizes its interaction with RAB11A and RAB11B. In terms of tissue distribution, highly expressed in brain.

The protein resides in the cytoplasm. It localises to the cytosol. Its subcellular location is the perinuclear region. The protein localises to the endosome membrane. It is found in the golgi apparatus. The protein resides in the trans-Golgi network. In terms of biological role, downstream effector for Rab11 which regulates Rab11 intracellular membrane trafficking functions such as endocytic recycling, intracellular ciliogenesis and protein export. ATK1-mediated phosphorylation of WDR44 induces binding to Rab11 which activates endocytic recycling of transferrin receptor back to the plasma membrane. When bound to Rab11, prevents the formation of the ciliogenic Rab11-Rabin8/RAB3IP-RAB11FIP3 complex, therefore inhibiting preciliary trafficking and ciliogenesis. Participates in neo-synthesized protein export by connecting the endoplasmic reticulum (ER) with the endosomal tubule via direct interactions with the integral ER proteins VAPA or VAPB and the endosomal protein GRAFs (GRAF1/ARHGAP26 or GRAF2/ARHGAP10), which facilitates the transfer of proteins such as E-cadherin, MPP14 and CFTR into a Rab8-Rab10-Rab11-dependent export route. The chain is WD repeat-containing protein 44 (WDR44) from Bos taurus (Bovine).